A 651-amino-acid chain; its full sequence is tRNA uridine 5-carboxymethylaminomethyl modification enzyme MnmG (651 aa).

FAD is bound at residue 11 to 16 (GAGHAG). 296 to 310 (GPRYCPSIEDKIVRF) provides a ligand contact to NAD(+).

It belongs to the MnmG family. In terms of assembly, homodimer. Heterotetramer of two MnmE and two MnmG subunits. The cofactor is FAD.

The protein resides in the cytoplasm. Its function is as follows. NAD-binding protein involved in the addition of a carboxymethylaminomethyl (cmnm) group at the wobble position (U34) of certain tRNAs, forming tRNA-cmnm(5)s(2)U34. The protein is tRNA uridine 5-carboxymethylaminomethyl modification enzyme MnmG of Chloroflexus aurantiacus (strain ATCC 29366 / DSM 635 / J-10-fl).